The sequence spans 256 residues: Eukaryotic translation initiation factor 3 subunit J (256 aa).

Composition is skewed to acidic residues over residues 1-14 and 35-54; these read MAENDSWDADDFEP and EGEDEEEDVKDNWDDEEEAE. Disordered stretches follow at residues 1 to 109 and 214 to 237; these read MAEN…SPEE and QSKAKKKKKGVVPGGGLKANMKND. The span at 55–101 shows a compositional bias: basic and acidic residues; the sequence is AATKQEAQKTVEPKVSEKKKLLEKIREKEKLHKKRQEEVNQQEKEGT. Residues 70–99 are a coiled coil; sequence SEKKKLLEKIREKEKLHKKRQEEVNQQEKE.

The protein belongs to the eIF-3 subunit J family. Component of the eukaryotic translation initiation factor 3 (eIF-3) complex, which is composed of 13 subunits: eif3a, eif3b, eif3c, eif3d, eif3e, eif3f, eif3g, eif3h, eif3i, eif3j, eif3k, eif3l and eif3m.

Its subcellular location is the cytoplasm. In terms of biological role, component of the eukaryotic translation initiation factor 3 (eIF-3) complex, which is involved in protein synthesis of a specialized repertoire of mRNAs and, together with other initiation factors, stimulates binding of mRNA and methionyl-tRNAi to the 40S ribosome. The eIF-3 complex specifically targets and initiates translation of a subset of mRNAs involved in cell proliferation. The sequence is that of Eukaryotic translation initiation factor 3 subunit J (eif3j) from Xenopus tropicalis (Western clawed frog).